Consider the following 402-residue polypeptide: Cysteine-rich venom protein (402 aa).

The N-terminal stretch at 1 to 13 (MNLALFIIFATIF) is a signal peptide. The SCP domain maps to 57-199 (LETHNQLRNK…VKKVLYTCNY (143 aa)).

This sequence belongs to the CRISP family. Contains 7 disulfide bonds. As to expression, expressed by the venom gland.

It localises to the secreted. The chain is Cysteine-rich venom protein from Tityus serrulatus (Brazilian scorpion).